The chain runs to 469 residues: UDP-N-acetylmuramate--L-alanine ligase (469 aa).

G123 to T129 is an ATP binding site.

The protein belongs to the MurCDEF family.

Its subcellular location is the cytoplasm. The enzyme catalyses UDP-N-acetyl-alpha-D-muramate + L-alanine + ATP = UDP-N-acetyl-alpha-D-muramoyl-L-alanine + ADP + phosphate + H(+). The protein operates within cell wall biogenesis; peptidoglycan biosynthesis. Cell wall formation. The sequence is that of UDP-N-acetylmuramate--L-alanine ligase from Synechococcus sp. (strain CC9605).